We begin with the raw amino-acid sequence, 485 residues long: PTS system arbutin-, cellobiose-, and salicin-specific EIIBC component (485 aa).

In terms of domain architecture, PTS EIIB type-1 spans 1 to 88 (MAKNYAALAR…VSLLPGDMQP (88 aa)). Catalysis depends on Cys28, which acts as the Phosphocysteine intermediate; for EIIB activity. A run of 10 helical transmembrane segments spans residues 102 to 122 (IGAG…PAII), 147 to 167 (LTIL…MVAA), 177 to 197 (MSLA…ELMA), 207 to 227 (FALI…ALVM), 254 to 274 (LIVL…GIWI), 285 to 305 (IHGY…PLLV), 330 to 350 (VMPS…AVAW), 363 to 383 (AAAA…GVAI), 389 to 409 (LIAS…AGLA), and 433 to 453 (IVWV…LTLL). The region spanning 108–470 (DALIGTMSPL…VEEAAAQARK (363 aa)) is the PTS EIIC type-1 domain.

It localises to the cell inner membrane. Functionally, the phosphoenolpyruvate-dependent sugar phosphotransferase system (sugar PTS), a major carbohydrate active -transport system, catalyzes the phosphorylation of incoming sugar substrates concomitantly with their translocation across the cell membrane. This system is involved in arbutin, cellobiose, and salicin transport. This is PTS system arbutin-, cellobiose-, and salicin-specific EIIBC component (ascF) from Escherichia coli (strain K12).